The sequence spans 144 residues: Large ribosomal subunit protein uL13 (144 aa).

It belongs to the universal ribosomal protein uL13 family. As to quaternary structure, part of the 50S ribosomal subunit.

This protein is one of the early assembly proteins of the 50S ribosomal subunit, although it is not seen to bind rRNA by itself. It is important during the early stages of 50S assembly. This is Large ribosomal subunit protein uL13 from Nitrosospira multiformis (strain ATCC 25196 / NCIMB 11849 / C 71).